We begin with the raw amino-acid sequence, 125 residues long: Succinate dehydrogenase assembly factor 3, mitochondrial (125 aa).

Residues 1–30 (MPGRHVSRVRALYKRVLQLHRVLPPDLKSL) constitute a mitochondrion transit peptide.

Belongs to the complex I LYR family. SDHAF3 subfamily. As to quaternary structure, interacts with SDHB within an SDHA-SDHB subcomplex.

The protein resides in the mitochondrion matrix. Plays an essential role in the assembly of succinate dehydrogenase (SDH), an enzyme complex (also referred to as respiratory complex II) that is a component of both the tricarboxylic acid (TCA) cycle and the mitochondrial electron transport chain, and which couples the oxidation of succinate to fumarate with the reduction of ubiquinone (coenzyme Q) to ubiquinol. Promotes maturation of the iron-sulfur protein subunit SDHB of the SDH catalytic dimer, protecting it from the deleterious effects of oxidants. May act together with SDHAF1. This is Succinate dehydrogenase assembly factor 3, mitochondrial from Homo sapiens (Human).